The primary structure comprises 369 residues: Cytokine receptor common subunit gamma (369 aa).

The first 22 residues, 1–22, serve as a signal peptide directing secretion; sequence MLKLLLSPRSFLVLQLLLLRAG. Residues 23 to 263 lie on the Extracellular side of the membrane; it reads WSSKVLMSSA…ENPSLFALEA (241 aa). A disulfide bond links C62 and C72. Residues N71, N75, N84, and N96 are each glycosylated (N-linked (GlcNAc...) asparagine). C102 and C115 form a disulfide bridge. Residues 156 to 254 form the Fibronectin type-III domain; the sequence is APENLTLSNL…VHWGSHTVEE (99 aa). 2 N-linked (GlcNAc...) asparagine glycosylation sites follow: N159 and N164. The WSXWS motif signature appears at 238-242; sequence WSKWS. Residues 264 to 284 traverse the membrane as a helical segment; the sequence is VLIPVGTMGLIITLIFVYCWL. The Cytoplasmic segment spans residues 285-369; the sequence is ERMPPIPPIK…PPCYSLKPEA (85 aa). A Box 1 motif motif is present at residues 286 to 294; the sequence is RMPPIPPIK.

Belongs to the type I cytokine receptor family. Type 5 subfamily. In terms of assembly, the gamma subunit is common to the IL2, IL4, IL7, IL15, IL21 and probably also the IL13 receptors. Interacts with SHB upon interleukin stimulation. Interacts with IL9.

It localises to the cell membrane. The protein resides in the cell surface. Functionally, common subunit for the receptors for a variety of interleukins. Probably in association with IL15RA, involved in the stimulation of neutrophil phagocytosis by IL15. In Mus musculus (Mouse), this protein is Cytokine receptor common subunit gamma (Il2rg).